The primary structure comprises 237 residues: Ribonuclease 3 (237 aa).

In terms of domain architecture, RNase III spans 6 to 133 (LIEVEKLIGI…VIAAVYLDKG (128 aa)). Residue glutamate 46 coordinates Mg(2+). Aspartate 50 is an active-site residue. 2 residues coordinate Mg(2+): aspartate 119 and glutamate 122. Glutamate 122 is an active-site residue. The DRBM domain maps to 160–229 (DFKTRLQEVL…AKAALQRLGE (70 aa)).

It belongs to the ribonuclease III family. As to quaternary structure, homodimer. Requires Mg(2+) as cofactor.

It localises to the cytoplasm. The enzyme catalyses Endonucleolytic cleavage to 5'-phosphomonoester.. Its function is as follows. Digests double-stranded RNA. Involved in the processing of primary rRNA transcript to yield the immediate precursors to the large and small rRNAs (23S and 16S). Processes some mRNAs, and tRNAs when they are encoded in the rRNA operon. Processes pre-crRNA and tracrRNA of type II CRISPR loci if present in the organism. The polypeptide is Ribonuclease 3 (Clostridium perfringens (strain 13 / Type A)).